We begin with the raw amino-acid sequence, 366 residues long: Anhydro-N-acetylmuramic acid kinase (366 aa).

10–17 (GTSMDGID) contributes to the ATP binding site.

This sequence belongs to the anhydro-N-acetylmuramic acid kinase family.

It catalyses the reaction 1,6-anhydro-N-acetyl-beta-muramate + ATP + H2O = N-acetyl-D-muramate 6-phosphate + ADP + H(+). It participates in amino-sugar metabolism; 1,6-anhydro-N-acetylmuramate degradation. It functions in the pathway cell wall biogenesis; peptidoglycan recycling. In terms of biological role, catalyzes the specific phosphorylation of 1,6-anhydro-N-acetylmuramic acid (anhMurNAc) with the simultaneous cleavage of the 1,6-anhydro ring, generating MurNAc-6-P. Is required for the utilization of anhMurNAc either imported from the medium or derived from its own cell wall murein, and thus plays a role in cell wall recycling. This is Anhydro-N-acetylmuramic acid kinase from Legionella pneumophila (strain Corby).